Consider the following 155-residue polypeptide: NADH-ubiquinone oxidoreductase chain 6 (155 aa).

4 helical membrane passes run 1–21 (MLGSIVVISMFMLLMNHPLAF), 42–62 (WISLILFLIFLGGILVMFIYV), 71–91 (FAVDLTSFMWVVPTIVLSFLV), and 121–141 (LTMLAYSFMVVYLFLALLLVI).

It belongs to the complex I subunit 6 family.

It is found in the mitochondrion membrane. The catalysed reaction is a ubiquinone + NADH + 5 H(+)(in) = a ubiquinol + NAD(+) + 4 H(+)(out). Core subunit of the mitochondrial membrane respiratory chain NADH dehydrogenase (Complex I) that is believed to belong to the minimal assembly required for catalysis. Complex I functions in the transfer of electrons from NADH to the respiratory chain. The immediate electron acceptor for the enzyme is believed to be ubiquinone. This Artemia franciscana (Brine shrimp) protein is NADH-ubiquinone oxidoreductase chain 6 (ND6).